A 101-amino-acid chain; its full sequence is Protein RnfH (101 aa).

It belongs to the UPF0125 (RnfH) family.

In Coxiella burnetii (strain CbuK_Q154) (Coxiella burnetii (strain Q154)), this protein is Protein RnfH.